A 212-amino-acid chain; its full sequence is SOSS complex subunit B1 (212 aa).

The OB DNA-binding region spans 22-92; the sequence is IVLETGRVTK…TLYTGRGGDL (71 aa). Residues 110–212 are disordered; sequence EPNPEYNTQQ…GKETRRSSKR (103 aa). Over residues 114–130 the composition is skewed to polar residues; it reads EYNTQQAPNKSVQNNDN. Thr117 is subject to Phosphothreonine; by ATM. Over residues 131-148 the composition is skewed to low complexity; sequence SPTAPQATTGPPAASPAS. Over residues 149-160 the composition is skewed to polar residues; the sequence is ENQNGNGLSTQL. Over residues 166 to 178 the composition is skewed to low complexity; it reads PHPSHTPSHPPST.

The protein belongs to the SOSS-B family. SOSS-B1 subfamily. In terms of assembly, component of the SOSS complex, composed of SOSS-B (SOSS-B1/NABP2 or SOSS-B2/NABP1), SOSS-A/INTS3 and SOSS-C/INIP. SOSS complexes containing SOSS-B1/NABP2 are more abundant than complexes containing SOSS-B2/NABP1. Directly interacts with ATM, SOSS-A/INTS3 and RAD51. Interacts with INTS7. Post-translationally, phosphorylated by ATM in response to DNA damage. Phosphorylation prevents degradation by the proteasome, hence stabilization of the protein and accumulation within cells. Ubiquitinated in a FBXL5-dependent manner, leading to proteasomal degradation.

Its subcellular location is the nucleus. Functionally, component of the SOSS complex, a multiprotein complex that functions downstream of the MRN complex to promote DNA repair and G2/M checkpoint. In the SOSS complex, acts as a sensor of single-stranded DNA that binds to single-stranded DNA, in particular to polypyrimidines. The SOSS complex associates with DNA lesions and influences diverse endpoints in the cellular DNA damage response including cell-cycle checkpoint activation, recombinational repair and maintenance of genomic stability. Required for efficient homologous recombination-dependent repair of double-strand breaks (DSBs) and ATM-dependent signaling pathways. The polypeptide is SOSS complex subunit B1 (Nabp2) (Mus musculus (Mouse)).